Reading from the N-terminus, the 436-residue chain is Homeobox protein PKNOX1 (436 aa).

The interval 23-50 (ELKTEQDPNCSDPDAEGVSPPPIESQTP) is disordered. Residues S33 and S41 each carry the phosphoserine modification. An MEIS N-terminal domain is found at 80–163 (GSEGTTSASF…MNSETLLSGE (84 aa)). Residues 259–321 (SKNKRGVLPK…NARRRILQPM (63 aa)) constitute a DNA-binding region (homeobox; TALE-type). Residues 401-436 (AGQSEDESVDSTEDEGGALAPTHISGLVLENSDSLQ) form a disordered region. The span at 404 to 416 (SEDESVDSTEDEG) shows a compositional bias: acidic residues.

The protein belongs to the TALE/MEIS homeobox family. Interacts with MN1.

It localises to the nucleus. Activates transcription in the presence of PBX1A and HOXA1. In terms of biological role, (Microbial infection) In complex with PBX1, binds to the 5'-TGATTGAC-3' consensus sequence in the U5 region of Moloney murine leukemia virus and promotes viral transcription. The sequence is that of Homeobox protein PKNOX1 from Mus musculus (Mouse).